We begin with the raw amino-acid sequence, 235 residues long: Ferric nitrobindin-like protein (235 aa).

The disordered stretch occupies residues 1 to 59; the sequence is MSDLASEGSDPAERASEHSNGNAPADRPARRSGDQAVADAAERAKATGSRNIPVLPDLP. Positions 85–91 match the GXWXGXG motif; sequence GVWRGEG.

This sequence belongs to the nitrobindin family.

This is Ferric nitrobindin-like protein from Nocardia farcinica (strain IFM 10152).